Reading from the N-terminus, the 82-residue chain is Beta-insect toxin AaBTxL1 (82 aa).

Positions 1–22 (MMKLVLFSVIVILFSLIGSIHG) are cleaved as a signal peptide. The 58-residue stretch at 25 to 82 (VPGNYPLDRSGKKYPCTITWKKNPSCIQICKKHGVKYGYCFDFQCWCEIFGRLKTFKI) folds into the LCN-type CS-alpha/beta domain. 3 disulfides stabilise this stretch: Cys-40–Cys-64, Cys-50–Cys-69, and Cys-54–Cys-71.

The protein belongs to the long (3 C-C) scorpion toxin superfamily. Sodium channel inhibitor family. Beta subfamily. As to expression, expressed by the venom gland.

Its subcellular location is the secreted. In terms of biological role, shifts the voltage of activation of para/tipE voltage-dependent sodium channels (Nav) toward more negative potentials. In Androctonus australis (Sahara scorpion), this protein is Beta-insect toxin AaBTxL1.